We begin with the raw amino-acid sequence, 489 residues long: Betaine aldehyde dehydrogenase (489 aa).

The K(+) site is built by Thr-26 and Asp-93. 150-152 (GAW) lines the NAD(+) pocket. The Charge relay system role is filled by Lys-162. 176-179 (KPSE) lines the NAD(+) pocket. Val-180 is a binding site for K(+). 229 to 232 (GVET) provides a ligand contact to NAD(+). Leu-245 provides a ligand contact to K(+). The active-site Proton acceptor is Glu-251. 3 residues coordinate NAD(+): Gly-253, Cys-285, and Glu-386. Catalysis depends on Cys-285, which acts as the Nucleophile. A Cysteine sulfenic acid (-SOH) modification is found at Cys-285. K(+) contacts are provided by Lys-456 and Gly-459. The Charge relay system role is filled by Glu-463.

Belongs to the aldehyde dehydrogenase family. Dimer of dimers. K(+) serves as cofactor.

It catalyses the reaction betaine aldehyde + NAD(+) + H2O = glycine betaine + NADH + 2 H(+). It participates in amine and polyamine biosynthesis; betaine biosynthesis via choline pathway; betaine from betaine aldehyde: step 1/1. Its function is as follows. Involved in the biosynthesis of the osmoprotectant glycine betaine. Catalyzes the irreversible oxidation of betaine aldehyde to the corresponding acid. This chain is Betaine aldehyde dehydrogenase, found in Burkholderia cenocepacia (strain ATCC BAA-245 / DSM 16553 / LMG 16656 / NCTC 13227 / J2315 / CF5610) (Burkholderia cepacia (strain J2315)).